The following is a 311-amino-acid chain: Protein translocase subunit SecF (311 aa).

6 helical membrane passes run 23-42 (VSYSFSIILSLISLIWISIY), 140-160 (IEAGAMAMLFSFLAIMVYIGV), 164-184 (WYFGFGILIALVHDVILALGF), 194-214 (LSTIAAVLTIIGYSVNDSVVI), 246-266 (ILTVITTLLANLALILFGGKA), and 272-292 (VLVFFGIIAGTYSSIFISAPI).

The protein belongs to the SecD/SecF family. SecF subfamily. Forms a complex with SecD. Part of the essential Sec protein translocation apparatus which comprises SecA, SecYEG and auxiliary proteins SecDF-YajC and YidC.

The protein resides in the cell inner membrane. Part of the Sec protein translocase complex. Interacts with the SecYEG preprotein conducting channel. SecDF uses the proton motive force (PMF) to complete protein translocation after the ATP-dependent function of SecA. This is Protein translocase subunit SecF from Rickettsia prowazekii (strain Madrid E).